Here is a 538-residue protein sequence, read N- to C-terminus: Cytosolic Fe-S cluster assembly factor NAR1 homolog (538 aa).

Cys19, Cys64, Cys67, Cys70, Cys218, Cys273, Cys453, and Cys457 together coordinate [4Fe-4S] cluster.

Belongs to the NARF family.

Its subcellular location is the cytoplasm. It localises to the nucleus. Functionally, component of the cytosolic Fe/S protein assembly machinery. Required for maturation of extramitochondrial Fe/S proteins. May play a role in the transfer of pre-assembled Fe/S clusters to target apoproteins. This is Cytosolic Fe-S cluster assembly factor NAR1 homolog from Schizosaccharomyces pombe (strain 972 / ATCC 24843) (Fission yeast).